A 191-amino-acid chain; its full sequence is Thymidine kinase (191 aa).

ATP-binding positions include 15–22 (GPMYSGKT) and 88–91 (DEAQ). Glutamate 89 (proton acceptor) is an active-site residue. 4 residues coordinate Zn(2+): cysteine 145, cysteine 148, cysteine 183, and cysteine 186.

The protein belongs to the thymidine kinase family. As to quaternary structure, homotetramer.

The protein resides in the cytoplasm. It catalyses the reaction thymidine + ATP = dTMP + ADP + H(+). This is Thymidine kinase from Clostridium botulinum (strain Kyoto / Type A2).